Reading from the N-terminus, the 163-residue chain is MDALEEESFALSFSSTSDAEFDAVVGYLEDIIMDDEFQLLQRNFMDKYYLEFEDTEENKLIYTPIFNEYISLVEKYIEEQLLQRIPGFNMAAFTTTLQHHKDEVAGDIFDMLLTFTDFLAFKEMFLDYRAEKEGRGLDLSSGLVVTSLCKSSSLPASQNNLRH.

The protein belongs to the ARL2BP family. In terms of assembly, interacts with GTP bound ARL2 and ARL3; the complex ARL2-ARL2BP as well as ARL2BP alone, binds to SLC25A4/ANT1. Interaction with ARL2 may be required for cilia basal body localization. Interacts with STAT3; interaction is enhanced with ARL2. Found in a complex with ARL2BP, ARL2 and SLC25A6. Found in a complex with ARL2, ARL2BP and SLC25A4. Interacts with STAT2, STAT3 and STAT4.

The protein resides in the cytoplasm. It is found in the mitochondrion intermembrane space. Its subcellular location is the cytoskeleton. It localises to the microtubule organizing center. The protein localises to the centrosome. The protein resides in the nucleus. It is found in the spindle. Its subcellular location is the cilium basal body. Functionally, together with ARL2, plays a role in the nuclear translocation, retention and transcriptional activity of STAT3. May play a role as an effector of ARL2. This Pongo abelii (Sumatran orangutan) protein is ADP-ribosylation factor-like protein 2-binding protein (ARL2BP).